The following is a 1044-amino-acid chain: Translation initiation factor IF-2 (1044 aa).

A disordered region spans residues 55 to 458 (EAQEGQGAGK…KRKASAQERR (404 aa)). Residues 57 to 77 (QEGQGAGKSAAKSAKPAAQPK) are compositionally biased toward low complexity. Positions 104 to 146 (LSEKRERRPLTERRPLAERRPLAERPLVDRPVTERPLAERPAA) are enriched in basic and acidic residues. Low complexity-rich tracts occupy residues 147–168 (ELRPGAAKAAAPARPAAEAQPV), 190–231 (KAQP…QKPA), and 254–265 (ASSRPASAAPAA). Residues 267 to 281 (GEKRPAAAAERREEP) show a composition bias toward basic and acidic residues. Composition is skewed to low complexity over residues 352–375 (AAGQGTAARAGGLGLPQKPKAGAP) and 383–395 (APQRPGRRGAPLA). Over residues 399 to 444 (LDPKVAEQAKAGEGKPRYGQSGDKRRADLYDRREHPSSQPSEEKLF) the composition is skewed to basic and acidic residues. Positions 546–714 (PRHPVVTIMG…ILVLAEVSDL (169 aa)) constitute a tr-type G domain. The interval 555–562 (GHVDHGKT) is G1. GTP is bound at residue 555–562 (GHVDHGKT). A G2 region spans residues 580-584 (GITQH). The G3 stretch occupies residues 601 to 604 (DTPG). Residues 601 to 605 (DTPGH) and 655 to 658 (NKID) contribute to the GTP site. The tract at residues 655–658 (NKID) is G4. The segment at 691–693 (SAK) is G5.

This sequence belongs to the TRAFAC class translation factor GTPase superfamily. Classic translation factor GTPase family. IF-2 subfamily.

Its subcellular location is the cytoplasm. Functionally, one of the essential components for the initiation of protein synthesis. Protects formylmethionyl-tRNA from spontaneous hydrolysis and promotes its binding to the 30S ribosomal subunits. Also involved in the hydrolysis of GTP during the formation of the 70S ribosomal complex. The polypeptide is Translation initiation factor IF-2 (Symbiobacterium thermophilum (strain DSM 24528 / JCM 14929 / IAM 14863 / T)).